Reading from the N-terminus, the 621-residue chain is CEP295 N-terminal-like protein (621 aa).

Positions 142–253 (GGRARENEPD…RSKGADLERS (112 aa)) are disordered. The segment covering 159–170 (RSARPPRAKEKH) has biased composition (basic residues). The segment covering 171–185 (RAALSEERSCREELG) has biased composition (basic and acidic residues). Positions 203–213 (KPQTTKATGRM) are enriched in polar residues. Basic and acidic residues predominate over residues 219–229 (PPEKRKGRPEP). Positions 328-359 (QCTLREKNKWQKELELAFEELFNINRKLKKHL) form a coiled coil. Disordered stretches follow at residues 385–421 (CGAG…ASKT), 491–529 (DQAD…PDMS), and 543–586 (REQR…DRHS). The stretch at 498–525 (STASRQRQKAEMEQRRQKQLESLEQMEH) forms a coiled coil. The span at 505–529 (QKAEMEQRRQKQLESLEQMEHPDMS) shows a compositional bias: basic and acidic residues. Over residues 568–578 (ELSTTSPSGTS) the composition is skewed to polar residues.

It is found in the cell projection. The protein localises to the cilium. This is CEP295 N-terminal-like protein from Homo sapiens (Human).